A 641-amino-acid chain; its full sequence is DNA mismatch repair protein MutL (641 aa).

Residues 345–445 (PAAVAPPAPA…GDTSLGDTSP (101 aa)) are disordered. Residues 419 to 429 (PRTEPATRTGE) show a composition bias toward basic and acidic residues. Residues 432 to 442 (GISSGDTSLGD) show a composition bias toward polar residues.

The protein belongs to the DNA mismatch repair MutL/HexB family.

Functionally, this protein is involved in the repair of mismatches in DNA. It is required for dam-dependent methyl-directed DNA mismatch repair. May act as a 'molecular matchmaker', a protein that promotes the formation of a stable complex between two or more DNA-binding proteins in an ATP-dependent manner without itself being part of a final effector complex. The chain is DNA mismatch repair protein MutL from Azotobacter vinelandii (strain DJ / ATCC BAA-1303).